A 157-amino-acid chain; its full sequence is UPF0262 protein RHECIAT_CH0000657 (157 aa).

This sequence belongs to the UPF0262 family.

This Rhizobium etli (strain CIAT 652) protein is UPF0262 protein RHECIAT_CH0000657.